The chain runs to 612 residues: Threonine--tRNA ligase (612 aa).

Residues 218-509 form a catalytic region; the sequence is DHRKLGVELG…LSEHFGGNFP (292 aa). C310, H361, and H486 together coordinate Zn(2+).

The protein belongs to the class-II aminoacyl-tRNA synthetase family. In terms of assembly, homodimer. It depends on Zn(2+) as a cofactor.

Its subcellular location is the cytoplasm. The catalysed reaction is tRNA(Thr) + L-threonine + ATP = L-threonyl-tRNA(Thr) + AMP + diphosphate + H(+). Functionally, catalyzes the attachment of threonine to tRNA(Thr) in a two-step reaction: L-threonine is first activated by ATP to form Thr-AMP and then transferred to the acceptor end of tRNA(Thr). Also edits incorrectly charged L-seryl-tRNA(Thr). This Helicobacter pylori (strain P12) protein is Threonine--tRNA ligase.